The sequence spans 38 residues: Photosystem II reaction center protein L (38 aa).

Residues serine 17–phenylalanine 37 traverse the membrane as a helical segment.

The protein belongs to the PsbL family. In terms of assembly, PSII is composed of 1 copy each of membrane proteins PsbA, PsbB, PsbC, PsbD, PsbE, PsbF, PsbH, PsbI, PsbJ, PsbK, PsbL, PsbM, PsbT, PsbX, PsbY, PsbZ, Psb30/Ycf12, at least 3 peripheral proteins of the oxygen-evolving complex and a large number of cofactors. It forms dimeric complexes.

Its subcellular location is the plastid. The protein localises to the cyanelle thylakoid membrane. In terms of biological role, one of the components of the core complex of photosystem II (PSII). PSII is a light-driven water:plastoquinone oxidoreductase that uses light energy to abstract electrons from H(2)O, generating O(2) and a proton gradient subsequently used for ATP formation. It consists of a core antenna complex that captures photons, and an electron transfer chain that converts photonic excitation into a charge separation. This subunit is found at the monomer-monomer interface and is required for correct PSII assembly and/or dimerization. The protein is Photosystem II reaction center protein L of Cyanophora paradoxa.